The following is a 647-amino-acid chain: DNA mismatch repair protein MutL (647 aa).

The disordered stretch occupies residues 393-423 (VSLVANKQQPTVKQAKRSADDSDSEHGKLDY). Residues 409 to 423 (RSADDSDSEHGKLDY) show a composition bias toward basic and acidic residues.

The protein belongs to the DNA mismatch repair MutL/HexB family.

In terms of biological role, this protein is involved in the repair of mismatches in DNA. It is required for dam-dependent methyl-directed DNA mismatch repair. May act as a 'molecular matchmaker', a protein that promotes the formation of a stable complex between two or more DNA-binding proteins in an ATP-dependent manner without itself being part of a final effector complex. This Streptococcus thermophilus (strain CNRZ 1066) protein is DNA mismatch repair protein MutL.